Here is a 198-residue protein sequence, read N- to C-terminus: Large ribosomal subunit protein bL12m (198 aa).

Residues 1–36 (MLPSATSLLRGPCLGLRAAALRLVRQQVPHVCAVRL) constitute a mitochondrion transit peptide. Low complexity predominate over residues 106-115 (GAAPAPTAPE). The segment at 106 to 126 (GAAPAPTAPEAAEEDVPKQKE) is disordered. Residues lysine 125, lysine 138, lysine 142, and lysine 144 each carry the N6-acetyllysine modification. An N6-acetyllysine; alternate modification is found at lysine 150. Lysine 150 bears the N6-succinyllysine; alternate mark. Lysine 150 participates in a covalent cross-link: Glycyl lysine isopeptide (Lys-Gly) (interchain with G-Cter in ubiquitin). Residue lysine 162 is modified to N6-succinyllysine. N6-acetyllysine is present on residues lysine 163 and lysine 173. Lysine 178 bears the N6-acetyllysine; alternate mark. Lysine 178 is modified (N6-succinyllysine; alternate). Lysine 185 is modified (N6-acetyllysine).

The protein belongs to the bacterial ribosomal protein bL12 family. In terms of assembly, component of the mitochondrial ribosome large subunit (39S) which comprises a 16S rRNA and about 50 distinct proteins. Interacts with NOA1. Two mature forms are produced by differential two-step proteolytic cleavage. Cleaved by the mitochondrial processing protease to produce the long mature form and subsequently by the mitochondrial intermediate protease to produce the short mature form. In terms of processing, in the presence of CUL3, undergoes 'Lys-63'-linked ubiquitination at Lys-150 which results in proteasomal degradation.

It is found in the mitochondrion matrix. As a component of the mitochondrial large ribosomal subunit, plays a role in mitochondrial translation. When present in mitochondria as a free protein not associated with the ribosome, associates with mitochondrial RNA polymerase POLRMT to activate transcription. Required for POLRMT stability. This chain is Large ribosomal subunit protein bL12m (MRPL12), found in Bos taurus (Bovine).